The sequence spans 769 residues: Non-secreted LysM effector LysM17 (769 aa).

A helical transmembrane segment spans residues 173–193 (LPPLATAIPLAVVWASLASVI). Asn-305, Asn-368, Asn-423, and Asn-452 each carry an N-linked (GlcNAc...) asparagine glycan. LysM domains are found at residues 498–543 (RTIQ…HVCC) and 562–610 (YSNL…KICL). Asn-631, Asn-671, Asn-706, and Asn-734 each carry an N-linked (GlcNAc...) asparagine glycan.

It belongs to the secreted LysM effector family.

It is found in the membrane. Functionally, non-secreted LysM effector that might be involved in manipulation of host defenses for successful infection. This Penicillium expansum (Blue mold rot fungus) protein is Non-secreted LysM effector LysM17.